Consider the following 133-residue polypeptide: ATP synthase epsilon chain, chloroplastic (133 aa).

It belongs to the ATPase epsilon chain family. In terms of assembly, F-type ATPases have 2 components, CF(1) - the catalytic core - and CF(0) - the membrane proton channel. CF(1) has five subunits: alpha(3), beta(3), gamma(1), delta(1), epsilon(1). CF(0) has three main subunits: a, b and c.

It localises to the plastid. It is found in the chloroplast thylakoid membrane. Produces ATP from ADP in the presence of a proton gradient across the membrane. This Vitis vinifera (Grape) protein is ATP synthase epsilon chain, chloroplastic.